The sequence spans 473 residues: Cysteine--tRNA ligase (473 aa).

A Zn(2+)-binding site is contributed by C33. The 'HIGH' region motif lies at 35–45 (ATVQGQPHIGH). 3 residues coordinate Zn(2+): C211, H236, and E240. A 'KMSKS' region motif is present at residues 267–271 (KMSKS). Residue K270 participates in ATP binding.

The protein belongs to the class-I aminoacyl-tRNA synthetase family. As to quaternary structure, monomer. Zn(2+) serves as cofactor.

The protein resides in the cytoplasm. It catalyses the reaction tRNA(Cys) + L-cysteine + ATP = L-cysteinyl-tRNA(Cys) + AMP + diphosphate. The polypeptide is Cysteine--tRNA ligase (Mycobacterium leprae (strain Br4923)).